Here is a 270-residue protein sequence, read N- to C-terminus: uncharacterized protein (270 aa).

2 disordered regions span residues 35–67 (IKQD…GGNK) and 168–204 (SNNN…DNSN). Low complexity predominate over residues 39 to 48 (NNNNNNNNTN). Over residues 49 to 67 (VSLSPSIKSQATSSTGGNK) the composition is skewed to polar residues. Low complexity predominate over residues 168 to 191 (SNNNNNNNNNNNNNNNNNNNNNNN).

This is an uncharacterized protein from Dictyostelium discoideum (Social amoeba).